The following is a 156-amino-acid chain: Small ribosomal subunit protein uS7 (156 aa).

Belongs to the universal ribosomal protein uS7 family. As to quaternary structure, part of the 30S ribosomal subunit. Contacts proteins S9 and S11.

In terms of biological role, one of the primary rRNA binding proteins, it binds directly to 16S rRNA where it nucleates assembly of the head domain of the 30S subunit. Is located at the subunit interface close to the decoding center, probably blocks exit of the E-site tRNA. This Allorhizobium ampelinum (strain ATCC BAA-846 / DSM 112012 / S4) (Agrobacterium vitis (strain S4)) protein is Small ribosomal subunit protein uS7.